Here is a 144-residue protein sequence, read N- to C-terminus: Gas vesicle protein A1 (144 aa).

The disordered stretch occupies residues 72–144 (EAGPRKDPGL…APSRRKEEQE (73 aa)). Over residues 113–127 (KQARDDGGSERETSS) the composition is skewed to basic and acidic residues.

The protein belongs to the gas vesicle GvpA family. In terms of assembly, the gas vesicle shell is 2 nm thick and consists of a single layer of this protein. It forms helical ribs nearly perpendicular to the long axis of the vesicle.

It localises to the gas vesicle shell. Gas vesicles are hollow, gas filled proteinaceous nanostructures found in some microorganisms. During planktonic growth they allow positioning of the organism at a favorable depth for light or nutrient acquisition. GvpA forms the protein shell. It is not clear what function GVs perform in soil bacteria. The protein is Gas vesicle protein A1 of Streptomyces coelicolor (strain ATCC BAA-471 / A3(2) / M145).